A 575-amino-acid chain; its full sequence is Eukaryotic translation initiation factor 3 subunit D (575 aa).

2 disordered regions span residues 36–66 (PYSKGDKLGRMADWTEGKDRERGGRQQYGNR) and 103–177 (STRT…DASV). Positions 39–59 (KGDKLGRMADWTEGKDRERGG) are enriched in basic and acidic residues. A compositionally biased stretch (gly residues) spans 109–144 (FGRGGGTVFGRGRGQRGGQAQRGGRGTFQRVGGRGG). Over residues 163–174 (GWRDDKPQRNRD) the composition is skewed to basic and acidic residues. Residues 302–316 (NLDMVTVNENAADAP) form an RNA gate region.

The protein belongs to the eIF-3 subunit D family. In terms of assembly, component of the eukaryotic translation initiation factor 3 (eIF-3) complex.

The protein resides in the cytoplasm. Functionally, mRNA cap-binding component of the eukaryotic translation initiation factor 3 (eIF-3) complex, which is involved in protein synthesis of a specialized repertoire of mRNAs and, together with other initiation factors, stimulates binding of mRNA and methionyl-tRNAi to the 40S ribosome. The eIF-3 complex specifically targets and initiates translation of a subset of mRNAs involved in cell proliferation. In the eIF-3 complex, eif3d specifically recognizes and binds the 7-methylguanosine cap of a subset of mRNAs. This Phaeosphaeria nodorum (strain SN15 / ATCC MYA-4574 / FGSC 10173) (Glume blotch fungus) protein is Eukaryotic translation initiation factor 3 subunit D.